The sequence spans 807 residues: Poly-beta-1,6-N-acetyl-D-glucosamine export protein (807 aa).

An N-terminal signal peptide occupies residues 1-26; that stretch reads MYSSSRKRCPKTKWALKLLTAAFLAA. TPR repeat units lie at residues 98 to 131, 165 to 198, and 279 to 311; these read ARGY…EPQN, KANL…NAST, and RIQV…GQII.

Its subcellular location is the cell outer membrane. Functionally, exports the biofilm adhesin polysaccharide poly-beta-1,6-N-acetyl-D-glucosamine (PGA) across the outer membrane. The PGA transported seems to be partially N-deacetylated since N-deacetylation of PGA by PgaB is needed for PGA export through the PgaA porin. The sequence is that of Poly-beta-1,6-N-acetyl-D-glucosamine export protein (pgaA) from Escherichia coli O157:H7.